Reading from the N-terminus, the 425-residue chain is Enolase (425 aa).

A (2R)-2-phosphoglycerate-binding site is contributed by Q163. E205 functions as the Proton donor in the catalytic mechanism. The Mg(2+) site is built by D242, E285, and D312. Residues K337, R366, S367, and K388 each coordinate (2R)-2-phosphoglycerate. K337 (proton acceptor) is an active-site residue.

This sequence belongs to the enolase family. Mg(2+) serves as cofactor.

It localises to the cytoplasm. The protein resides in the secreted. Its subcellular location is the cell surface. It catalyses the reaction (2R)-2-phosphoglycerate = phosphoenolpyruvate + H2O. It functions in the pathway carbohydrate degradation; glycolysis; pyruvate from D-glyceraldehyde 3-phosphate: step 4/5. Catalyzes the reversible conversion of 2-phosphoglycerate (2-PG) into phosphoenolpyruvate (PEP). It is essential for the degradation of carbohydrates via glycolysis. The sequence is that of Enolase from Granulibacter bethesdensis (strain ATCC BAA-1260 / CGDNIH1).